The primary structure comprises 393 residues: NAD(P)H-quinone oxidoreductase subunit H, chloroplastic (393 aa).

This sequence belongs to the complex I 49 kDa subunit family. NDH is composed of at least 16 different subunits, 5 of which are encoded in the nucleus. Interacts with the chaperonin CNP60B4 subunit.

The protein resides in the plastid. It localises to the chloroplast thylakoid membrane. The catalysed reaction is a plastoquinone + NADH + (n+1) H(+)(in) = a plastoquinol + NAD(+) + n H(+)(out). The enzyme catalyses a plastoquinone + NADPH + (n+1) H(+)(in) = a plastoquinol + NADP(+) + n H(+)(out). NDH shuttles electrons from NAD(P)H:plastoquinone, via FMN and iron-sulfur (Fe-S) centers, to quinones in the photosynthetic chain and possibly in a chloroplast respiratory chain. The immediate electron acceptor for the enzyme in this species is believed to be plastoquinone. Couples the redox reaction to proton translocation, and thus conserves the redox energy in a proton gradient. The sequence is that of NAD(P)H-quinone oxidoreductase subunit H, chloroplastic from Arabidopsis thaliana (Mouse-ear cress).